The chain runs to 270 residues: 3-phenylpropionate-dihydrodiol/cinnamic acid-dihydrodiol dehydrogenase (270 aa).

Residue Phe-10–Ala-34 coordinates NAD(+). Residue Ser-143 coordinates substrate. Tyr-156 functions as the Proton acceptor in the catalytic mechanism.

Belongs to the short-chain dehydrogenases/reductases (SDR) family.

The catalysed reaction is 3-(cis-5,6-dihydroxycyclohexa-1,3-dien-1-yl)propanoate + NAD(+) = 3-(2,3-dihydroxyphenyl)propanoate + NADH + H(+). The enzyme catalyses (2E)-3-(cis-5,6-dihydroxycyclohexa-1,3-dien-1-yl)prop-2-enoate + NAD(+) = (2E)-3-(2,3-dihydroxyphenyl)prop-2-enoate + NADH + H(+). It participates in aromatic compound metabolism; 3-phenylpropanoate degradation. In terms of biological role, converts 3-phenylpropionate-dihydrodiol (PP-dihydrodiol) and cinnamic acid-dihydrodiol (CI-dihydrodiol) into 3-(2,3-dihydroxylphenyl)propanoic acid (DHPP) and 2,3-dihydroxicinnamic acid (DHCI), respectively. This chain is 3-phenylpropionate-dihydrodiol/cinnamic acid-dihydrodiol dehydrogenase (hcaB), found in Escherichia coli.